Consider the following 394-residue polypeptide: Potassium channel subfamily K member 3 (394 aa).

Topologically, residues 1–8 (MKRQNVRT) are cytoplasmic. The helical transmembrane segment at 9–29 (LALIVCTFTYLLVGAAVFDAL) threads the bilayer. Asn53 is a glycosylation site (N-linked (GlcNAc...) asparagine). The segment at residues 78–101 (WRFAGSFYFAITVITTIGYGHAAP) is an intramembrane region (pore-forming). K(+)-binding residues include Thr93, Ile94, Gly95, and Tyr96. The tract at residues 93–98 (TIGYGH) is selectivity filter 1. A helical membrane pass occupies residues 108–128 (VFCMFYALLGIPLTLVMFQSL). The Cytoplasmic segment spans residues 129-158 (GERINTLVRYLLHRAKKGLGMRRADVSMAN). The helical transmembrane segment at 159–179 (MVLIGFFSCISTLCIGAAAFS) threads the bilayer. The pore-forming intramembrane region spans 184–207 (WTFFQAYYYCFITLTTIGFGDYVA). K(+) contacts are provided by Thr199, Ile200, Gly201, and Phe202. Positions 199–204 (TIGFGD) are selectivity filter 2. A helical transmembrane segment spans residues 223 to 243 (FSFVYILTGLTVIGAFLNLVV). Residues 243–248 (VLRFMT) are X-gate. Over 244–394 (LRFMTMNAED…RGLMKRRSSV (151 aa)) the chain is Cytoplasmic. 2 disordered regions span residues 266-286 (RNGQ…DTAS) and 338-357 (TCVE…SDTP). A compositionally biased stretch (gly residues) spans 269–278 (QAGGGGGGGS).

This sequence belongs to the two pore domain potassium channel (TC 1.A.1.8) family. Homodimer. Heterodimer with KCNK1. Heterodimer with KCNK9. As to expression, widespread expression in adult. Strongest expression in pancreas and placenta. Lower expression in brain, lung, prostate, heart, kidney, uterus, small intestine and colon.

Its subcellular location is the cell membrane. The enzyme catalyses K(+)(in) = K(+)(out). It carries out the reaction Na(+)(in) = Na(+)(out). Inhibited by external acidification, diacylglycerol and anandamide. Activated by halothane and isoflurane. K(+) channel that conducts voltage-dependent outward rectifying currents upon membrane depolarization. Voltage sensing is coupled to K(+) electrochemical gradient in an 'ion flux gating' mode where outward but not inward ion flow opens the gate. Changes ion selectivity and becomes permeable to Na(+) ions in response to extracellular acidification. Protonation of the pH sensor His-98 stabilizes C-type inactivation conformation likely converting the channel from outward K(+)-conducting, to inward Na(+)-conducting to nonconductive state. Homo- and heterodimerizes to form functional channels with distinct regulatory and gating properties. Allows K(+) currents with fast-gating kinetics important for the repolarization and hyperpolarization phases of action potentials. In cerebellar granule cells, heteromeric KCNK3:KCNK9 channel may hyperpolarize the resting membrane potential to limit intrinsic neuronal excitability, but once the action potential threshold is reached, it may support high-frequency action potential firing and increased neuronal excitability. Dispensable for central chemosensory respiration i.e. breathing controlled by brainstem CO2/pH, it rather conducts pH-sensitive currents and controls the firing rate of serotonergic raphe neurons involved in potentiation of the respiratory chemoreflex. Additionally, imparts chemosensitivity to type 1 cells in carotid bodies which respond to a decrease in arterial oxygen pressure or an increase in carbon dioxide pressure or pH to initiate adaptive changes in pulmonary ventilation. In adrenal gland, contributes to the maintenance of a hyperpolarized resting membrane potential of aldosterone-producing cells at zona glomerulosa and limits aldosterone release as part of a regulatory mechanism that controls arterial blood pressure and electrolyte homeostasis. In brown adipocytes, mediates K(+) efflux that counteracts norepinephrine-induced membrane depolarization, limits Ca(2+) efflux and downstream cAMP and PKA signaling, ultimately attenuating lipid oxidation and adaptive thermogenesis. This chain is Potassium channel subfamily K member 3, found in Homo sapiens (Human).